A 293-amino-acid chain; its full sequence is MFALSNNLNRVNACMDGFLARIRSHVDAHAPELRSLFDTMAAEARFARDWLSEDLARLPVGAALLEVGGGVLLLSCQLAAEGFDITAIEPTGEGFGKFRQLGDIVLELAAARPTIAPCKAEDFISEKRFDFAFSLNVMEHIDLPDEAVRRVSEVLKPGASYHFLCPNYVFPYEPHFNIPTFFTKELTCRVMRHRIEGNTGMDDPKGVWRSLNWITVPKVKRFAAKDATLTLRFHRAMLVWMLERALTDKEFAGRRAQWMVAAIRSAVKLRVHHLAGYVPATLQPIMDVRLTKR.

This is an uncharacterized protein from Mycobacterium tuberculosis (strain CDC 1551 / Oshkosh).